A 260-amino-acid polypeptide reads, in one-letter code: 4-hydroxy-tetrahydrodipicolinate reductase (260 aa).

NAD(+)-binding positions include 12–17 (GFRGKM), 92–94 (GTT), and 118–121 (APNF). The active-site Proton donor/acceptor is the His-148. His-149 lines the (S)-2,3,4,5-tetrahydrodipicolinate pocket. Lys-152 (proton donor) is an active-site residue. Position 158–159 (158–159 (GT)) interacts with (S)-2,3,4,5-tetrahydrodipicolinate.

Belongs to the DapB family.

The protein resides in the cytoplasm. It catalyses the reaction (S)-2,3,4,5-tetrahydrodipicolinate + NAD(+) + H2O = (2S,4S)-4-hydroxy-2,3,4,5-tetrahydrodipicolinate + NADH + H(+). The enzyme catalyses (S)-2,3,4,5-tetrahydrodipicolinate + NADP(+) + H2O = (2S,4S)-4-hydroxy-2,3,4,5-tetrahydrodipicolinate + NADPH + H(+). The protein operates within amino-acid biosynthesis; L-lysine biosynthesis via DAP pathway; (S)-tetrahydrodipicolinate from L-aspartate: step 4/4. Its function is as follows. Catalyzes the conversion of 4-hydroxy-tetrahydrodipicolinate (HTPA) to tetrahydrodipicolinate. The chain is 4-hydroxy-tetrahydrodipicolinate reductase from Lactococcus lactis subsp. cremoris (strain MG1363).